The primary structure comprises 345 residues: Acetylserotonin O-methyltransferase (345 aa).

S-adenosyl-L-methionine contacts are provided by residues Tyr147, Trp164, Asp210, 235–237, and Arg252; that span reads GDF. His255 acts as the Proton donor/acceptor in catalysis. The substrate site is built by Asp256, Asn302, and Gln306.

This sequence belongs to the class I-like SAM-binding methyltransferase superfamily. Cation-independent O-methyltransferase family. As to quaternary structure, homodimer. In terms of tissue distribution, expressed in the pineal gland (at protein level). Not detectable in retina, nor in liver.

The catalysed reaction is N-acetylserotonin + S-adenosyl-L-methionine = melatonin + S-adenosyl-L-homocysteine + H(+). It functions in the pathway aromatic compound metabolism; melatonin biosynthesis; melatonin from serotonin: step 1/2. Functionally, catalyzes the transfer of a methyl group onto N-acetylserotonin, producing melatonin (N-acetyl-5-methoxytryptamine). This Bos taurus (Bovine) protein is Acetylserotonin O-methyltransferase (ASMT).